Here is a 353-residue protein sequence, read N- to C-terminus: MTIALGRVTKEENDLFDIMDDWLRRDRFVFVGWSGLLLFPCAYFALGGWFTGTTFVTSWYTHGLASSYLEGCNFLTAAVSTPANSLAHSLLLLWGPEAQGDFTRWCQLGGLWTFVALHGAFALIGFMLRQFELARSVQLRPYNAISFSGPIAVFVSVFLIYPLGQSGWFFAPSFGVAAIFRFILFFQGFHNWTLNPFHMMGVAGVLGAALLCAIHGATVENTLFEDGDGANTFRAFNPTQAEETYSMVTANRFWSQIFGVAFSNKRWLHFFMLFVPVTGLWMSAIGVVGLALNLRAYDFVSQEIRAAEDPEFETFYTKNILLNEGIRAWMAAQDQPHENLIFPEEVLPRGNAL.

Thr2 bears the N-acetylthreonine mark. Thr2 is modified (phosphothreonine). Residues Cys41–Thr61 form a helical membrane-spanning segment. His118 is a chlorophyll a binding site. Residues Gly125–Pro141 form a helical membrane-spanning segment. Pheophytin a-binding residues include Gln130 and Asn143. A helical transmembrane segment spans residues Val153 to Ser166. Residue His198 participates in chlorophyll a binding. Residues Ala208 to Asp228 form a helical membrane-spanning segment. A plastoquinone-binding residues include His215 and Phe262. Residue His215 coordinates Fe cation. His269 provides a ligand contact to Fe cation. A helical membrane pass occupies residues Gly279–Arg295.

It belongs to the reaction center PufL/M/PsbA/D family. As to quaternary structure, PSII is composed of 1 copy each of membrane proteins PsbA, PsbB, PsbC, PsbD, PsbE, PsbF, PsbH, PsbI, PsbJ, PsbK, PsbL, PsbM, PsbT, PsbX, PsbY, PsbZ, Psb30/Ycf12, at least 3 peripheral proteins of the oxygen-evolving complex and a large number of cofactors. It forms dimeric complexes. It depends on The D1/D2 heterodimer binds P680, chlorophylls that are the primary electron donor of PSII, and subsequent electron acceptors. It shares a non-heme iron and each subunit binds pheophytin, quinone, additional chlorophylls, carotenoids and lipids. There is also a Cl(-1) ion associated with D1 and D2, which is required for oxygen evolution. The PSII complex binds additional chlorophylls, carotenoids and specific lipids. as a cofactor.

The protein localises to the plastid. The protein resides in the chloroplast thylakoid membrane. It carries out the reaction 2 a plastoquinone + 4 hnu + 2 H2O = 2 a plastoquinol + O2. In terms of biological role, photosystem II (PSII) is a light-driven water:plastoquinone oxidoreductase that uses light energy to abstract electrons from H(2)O, generating O(2) and a proton gradient subsequently used for ATP formation. It consists of a core antenna complex that captures photons, and an electron transfer chain that converts photonic excitation into a charge separation. The D1/D2 (PsbA/PsbD) reaction center heterodimer binds P680, the primary electron donor of PSII as well as several subsequent electron acceptors. D2 is needed for assembly of a stable PSII complex. The chain is Photosystem II D2 protein from Oryza nivara (Indian wild rice).